A 425-amino-acid chain; its full sequence is Multifunctional CCA protein (425 aa).

Positions 8 and 11 each coordinate ATP. 2 residues coordinate CTP: Gly-8 and Arg-11. The Mg(2+) site is built by Asp-21 and Asp-23. 3 residues coordinate ATP: Arg-91, Arg-141, and Arg-144. 3 residues coordinate CTP: Arg-91, Arg-141, and Arg-144. Positions 230 to 331 (TGVHLMMVLD…VRLLERCDAI (102 aa)) constitute an HD domain.

Belongs to the tRNA nucleotidyltransferase/poly(A) polymerase family. Bacterial CCA-adding enzyme type 1 subfamily. Monomer. Can also form homodimers and oligomers. It depends on Mg(2+) as a cofactor. Ni(2+) is required as a cofactor.

It carries out the reaction a tRNA precursor + 2 CTP + ATP = a tRNA with a 3' CCA end + 3 diphosphate. It catalyses the reaction a tRNA with a 3' CCA end + 2 CTP + ATP = a tRNA with a 3' CCACCA end + 3 diphosphate. Catalyzes the addition and repair of the essential 3'-terminal CCA sequence in tRNAs without using a nucleic acid template. Adds these three nucleotides in the order of C, C, and A to the tRNA nucleotide-73, using CTP and ATP as substrates and producing inorganic pyrophosphate. tRNA 3'-terminal CCA addition is required both for tRNA processing and repair. Also involved in tRNA surveillance by mediating tandem CCA addition to generate a CCACCA at the 3' terminus of unstable tRNAs. While stable tRNAs receive only 3'-terminal CCA, unstable tRNAs are marked with CCACCA and rapidly degraded. This chain is Multifunctional CCA protein, found in Acidovorax ebreus (strain TPSY) (Diaphorobacter sp. (strain TPSY)).